Reading from the N-terminus, the 55-residue chain is Small integral membrane protein 11 (55 aa).

A helical membrane pass occupies residues Val9 to Gly29. Residues Gln34–Ala54 are a coiled coil.

In terms of tissue distribution, expressed in brain, heart, kidney, thymus, liver, stomach, muscle, lung, testis, ovary, skin and eye.

The protein resides in the membrane. This chain is Small integral membrane protein 11, found in Mus musculus (Mouse).